Reading from the N-terminus, the 224-residue chain is Phosphoglycolate phosphatase (224 aa).

Catalysis depends on Asp-11, which acts as the Nucleophile. Mg(2+)-binding residues include Asp-11, Asp-13, and Asp-177.

The protein belongs to the HAD-like hydrolase superfamily. CbbY/CbbZ/Gph/YieH family. Mg(2+) serves as cofactor.

It carries out the reaction 2-phosphoglycolate + H2O = glycolate + phosphate. Its pathway is organic acid metabolism; glycolate biosynthesis; glycolate from 2-phosphoglycolate: step 1/1. Specifically catalyzes the dephosphorylation of 2-phosphoglycolate. Is involved in the dissimilation of the intracellular 2-phosphoglycolate formed during the DNA repair of 3'-phosphoglycolate ends, a major class of DNA lesions induced by oxidative stress. In Haemophilus influenzae (strain ATCC 51907 / DSM 11121 / KW20 / Rd), this protein is Phosphoglycolate phosphatase.